Reading from the N-terminus, the 91-residue chain is Anthranilate synthase component 2 (91 aa).

Residues 4–91 (NILIIDNYDS…CLGHQAIGEA (88 aa)) form the Glutamine amidotransferase type-1 domain. Residue 55–57 (GPG) participates in L-glutamine binding. The active-site Nucleophile; for GATase activity is the Cys82. Residue Gln86 participates in L-glutamine binding.

In terms of assembly, heterotetramer consisting of two non-identical subunits: a beta subunit (TrpG) and a large alpha subunit (TrpE).

The enzyme catalyses chorismate + L-glutamine = anthranilate + pyruvate + L-glutamate + H(+). Its pathway is amino-acid biosynthesis; L-tryptophan biosynthesis; L-tryptophan from chorismate: step 1/5. In terms of biological role, part of a heterotetrameric complex that catalyzes the two-step biosynthesis of anthranilate, an intermediate in the biosynthesis of L-tryptophan. In the first step, the glutamine-binding beta subunit (TrpG) of anthranilate synthase (AS) provides the glutamine amidotransferase activity which generates ammonia as a substrate that, along with chorismate, is used in the second step, catalyzed by the large alpha subunit of AS (TrpE) to produce anthranilate. In the absence of TrpG, TrpE can synthesize anthranilate directly from chorismate and high concentrations of ammonia. In Acetivibrio thermocellus (Hungateiclostridium thermocellum), this protein is Anthranilate synthase component 2 (trpG).